The chain runs to 186 residues: Dirigent protein 4 (186 aa).

Residues 1-20 (MGKNLGLVVSFYLCITFALG) form the signal peptide. N-linked (GlcNAc...) asparagine glycosylation is found at Asn-67, Asn-126, Asn-169, and Asn-180.

The protein belongs to the plant dirigent protein family. Homodimer.

The protein resides in the secreted. The protein localises to the extracellular space. It localises to the apoplast. Dirigent proteins impart stereoselectivity on the phenoxy radical-coupling reaction, yielding optically active lignans from two molecules of coniferyl alcohol in the biosynthesis of lignans, flavonolignans, and alkaloids and thus plays a central role in plant secondary metabolism. The protein is Dirigent protein 4 (DIR4) of Arabidopsis thaliana (Mouse-ear cress).